We begin with the raw amino-acid sequence, 98 residues long: Small ribosomal subunit protein uS17 (98 aa).

The protein belongs to the universal ribosomal protein uS17 family. As to quaternary structure, part of the 30S ribosomal subunit.

Its function is as follows. One of the primary rRNA binding proteins, it binds specifically to the 5'-end of 16S ribosomal RNA. The chain is Small ribosomal subunit protein uS17 from Carboxydothermus hydrogenoformans (strain ATCC BAA-161 / DSM 6008 / Z-2901).